We begin with the raw amino-acid sequence, 333 residues long: 4-hydroxyproline epimerase (333 aa).

The active-site Proton acceptor is Cys90. Residues 91–92 (GH) and Asp249 contribute to the substrate site. Residue Cys253 is the Proton donor of the active site. 254-255 (GT) contacts substrate.

The protein belongs to the proline racemase family. As to quaternary structure, homodimer.

The catalysed reaction is trans-4-hydroxy-L-proline = cis-4-hydroxy-D-proline. In terms of biological role, allows intracellular utilization of 4-hydroxyproline, one of the major constituents of host collagen, by converting 4-hydroxy-L-proline to 4-hydroxy-D-proline, which can be further metabolized by intracellular 4-hydroxy-D-proline oxidases. Strong B-cell mitogen. Plays an important role in the regulation of intra- and extracellular amino acid pools, allowing the bacterium to profit from host precursors and enzymatic pathways. In Brucella abortus (strain S19), this protein is 4-hydroxyproline epimerase.